A 317-amino-acid chain; its full sequence is Melanocyte-stimulating hormone receptor (317 aa).

Residues 1–37 (MPVQGSQRRLLGSLNSTPTATPHLGLAANQTGARCLE) lie on the Extracellular side of the membrane. Asn-29 is a glycosylation site (N-linked (GlcNAc...) asparagine). The chain crosses the membrane as a helical span at residues 38–63 (VSIPDGLFLSLGLVSLVENVLVVTAI). Topologically, residues 64–72 (AKNRNLHSP) are cytoplasmic. Residues 73–93 (MYCFICCLALSDLLVSGSNML) form a helical membrane-spanning segment. The Extracellular segment spans residues 94–118 (ETAVTLLLEAGALAARAAVVQQLDN). Residues 119–140 (VIDVITCSSMLSSLCFLGAIAV) traverse the membrane as a helical segment. Residues 141–163 (DRYISIFYALRYHSIVTLPRARR) lie on the Cytoplasmic side of the membrane. The chain crosses the membrane as a helical span at residues 164 to 183 (AVAAIWVASVLFSMLFIAYY). Over 184–191 (DHAAVLLC) the chain is Extracellular. Residues 192–211 (LVVFFLAMLVLMAVLYVHML) form a helical membrane-spanning segment. Over 212–240 (ARACQHAQGIARLHKRQRPAHQGFGLKGA) the chain is Cytoplasmic. Residues 241 to 266 (ATLTILLGIFFLCWGPFFLHLTLIVL) form a helical membrane-spanning segment. Residues 267-279 (CPQHPTCSCIFKN) are Extracellular-facing. A helical membrane pass occupies residues 280 to 300 (FNLFLALIICNAIIDPLIYAF). Residues 301 to 317 (RSQELRRTLKEVLLCSW) lie on the Cytoplasmic side of the membrane. Cys-315 carries S-palmitoyl cysteine lipidation.

The protein belongs to the G-protein coupled receptor 1 family. In terms of assembly, interacts with MGRN1, but does not undergo MGRN1-mediated ubiquitination; this interaction competes with GNAS-binding and thus inhibits agonist-induced cAMP production. Interacts with OPN3; the interaction results in a decrease in MC1R-mediated cAMP signaling and ultimately a decrease in melanin production in melanocytes.

It is found in the cell membrane. In terms of biological role, receptor for MSH (alpha, beta and gamma) and ACTH. The activity of this receptor is mediated by G proteins which activate adenylate cyclase. Mediates melanogenesis, the production of eumelanin (black/brown) and phaeomelanin (red/yellow), via regulation of cAMP signaling in melanocytes. In Miopithecus talapoin (Angolan talapoin), this protein is Melanocyte-stimulating hormone receptor (MC1R).